We begin with the raw amino-acid sequence, 228 residues long: Ribosomal RNA small subunit methyltransferase G (228 aa).

Residues glycine 89, leucine 94, 140 to 141 (VE), and arginine 159 each bind S-adenosyl-L-methionine.

Belongs to the methyltransferase superfamily. RNA methyltransferase RsmG family.

The protein localises to the cytoplasm. The catalysed reaction is guanosine(527) in 16S rRNA + S-adenosyl-L-methionine = N(7)-methylguanosine(527) in 16S rRNA + S-adenosyl-L-homocysteine. In terms of biological role, specifically methylates the N7 position of guanine in position 527 of 16S rRNA. The sequence is that of Ribosomal RNA small subunit methyltransferase G from Burkholderia cenocepacia (strain HI2424).